We begin with the raw amino-acid sequence, 97 residues long: YcgL domain-containing protein PSPPH_1548 (97 aa).

The region spanning 3-87 is the YcgL domain; it reads RICSIYRSPK…AEDDYIEHLP (85 aa).

In Pseudomonas savastanoi pv. phaseolicola (strain 1448A / Race 6) (Pseudomonas syringae pv. phaseolicola (strain 1448A / Race 6)), this protein is YcgL domain-containing protein PSPPH_1548.